A 460-amino-acid polypeptide reads, in one-letter code: Glutamyl-tRNA reductase (460 aa).

Residues Thr-48 to Arg-51, Ser-100, Glu-105 to Gln-107, and Gln-111 each bind substrate. Cys-49 functions as the Nucleophile in the catalytic mechanism. Gly-180 to Gly-185 is a binding site for NADP(+).

The protein belongs to the glutamyl-tRNA reductase family. In terms of assembly, homodimer.

The catalysed reaction is (S)-4-amino-5-oxopentanoate + tRNA(Glu) + NADP(+) = L-glutamyl-tRNA(Glu) + NADPH + H(+). It functions in the pathway porphyrin-containing compound metabolism; protoporphyrin-IX biosynthesis; 5-aminolevulinate from L-glutamyl-tRNA(Glu): step 1/2. Its function is as follows. Catalyzes the NADPH-dependent reduction of glutamyl-tRNA(Glu) to glutamate 1-semialdehyde (GSA). In Methanosarcina acetivorans (strain ATCC 35395 / DSM 2834 / JCM 12185 / C2A), this protein is Glutamyl-tRNA reductase.